The primary structure comprises 439 residues: 23S rRNA (uracil(1939)-C(5))-methyltransferase RlmD (439 aa).

Residues 1–54 (MTAPVLIESLDQEGRGVAHAEGKVIFIEGALPGEVVTYNAYRRKPSFELAQVGQ) form the TRAM domain. Residues cysteine 67, cysteine 73, cysteine 76, and cysteine 155 each coordinate [4Fe-4S] cluster. S-adenosyl-L-methionine contacts are provided by glutamine 264, phenylalanine 293, asparagine 298, glutamate 314, asparagine 342, and aspartate 363. The Nucleophile role is filled by cysteine 391.

The protein belongs to the class I-like SAM-binding methyltransferase superfamily. RNA M5U methyltransferase family. RlmD subfamily.

It catalyses the reaction uridine(1939) in 23S rRNA + S-adenosyl-L-methionine = 5-methyluridine(1939) in 23S rRNA + S-adenosyl-L-homocysteine + H(+). Its function is as follows. Catalyzes the formation of 5-methyl-uridine at position 1939 (m5U1939) in 23S rRNA. The chain is 23S rRNA (uracil(1939)-C(5))-methyltransferase RlmD from Nitrosospira multiformis (strain ATCC 25196 / NCIMB 11849 / C 71).